Reading from the N-terminus, the 799-residue chain is Oligopeptide transporter 1 (799 aa).

Disordered regions lie at residues 1–26 (MSTI…PIQI) and 43–64 (DVNN…QKFD). Residues 1-108 (MSTIYRESDS…DPTIRLNHWR (108 aa)) lie on the Extracellular side of the membrane. Low complexity predominate over residues 13-26 (SEPSPTPTTIPIQI). A glycan (N-linked (GlcNAc...) asparagine) is linked at N46. Phosphothreonine occurs at positions 48, 50, and 51. The helical transmembrane segment at 109–129 (TWFLTTVFVVVFAGVNQFFSL) threads the bilayer. The Cytoplasmic segment spans residues 130 to 135 (RYPSLE). The helical transmembrane segment at 136–156 (INFLVAQVVCYPIGRILALLP) threads the bilayer. Residues 157-177 (DWKCSKVPFFDLNPGPFTKKE) lie on the Extracellular side of the membrane. A helical transmembrane segment spans residues 178-198 (HAVVTIAVALTSSTAYAMYIL). At 199-210 (NAQGSFYNMKLN) the chain is on the cytoplasmic side. A helical transmembrane segment spans residues 211-231 (VGYQFLLVWTSQMIGYGAAGL). Residues 232 to 276 (TRRWVVNPASSIWPQTLISVSLFDSLHSRKVEKTVANGWTMPRYR) are Extracellular-facing. A helical transmembrane segment spans residues 277-297 (FFLIVLIGSFIWYWVPGFLFT). Over 298–313 (GLSYFNVILWGSKTRH) the chain is Cytoplasmic. Residues 314–334 (NFIANTIFGTQSGLGALPITF) traverse the membrane as a helical segment. Residues 335-359 (DYTQVSQAMSGSVFATPFYVSANTY) lie on the Extracellular side of the membrane. Residues 360–380 (ASVLIFFVIVLPCLYFTNTWY) traverse the membrane as a helical segment. The Cytoplasmic portion of the chain corresponds to 381–428 (AKYMPVISGSTYDNTQNKYNVTKILNEDYSINLEKYKEYSPVFVPFSY). A helical transmembrane segment spans residues 429–449 (LLSYALNFAAVIAVFVHCILY). The Extracellular portion of the chain corresponds to 450-482 (HGKDIVAKFKDRKNGGTDIHMRIYSKNYKDCPD). The helical transmembrane segment at 483–503 (WWYLLLQIVMIGLGFVAVCCF) threads the bilayer. Over 504–508 (DTKFP) the chain is Cytoplasmic. A helical membrane pass occupies residues 509-529 (AWAFVIAILISLVNFIPQGIL). Residues 530–540 (EAMTNQHVGLN) are Extracellular-facing. Residues 541-561 (IITELICGYMLPLRPMANLLF) form a helical membrane-spanning segment. Residues 562 to 590 (KLYGFIVMRQGLNLSRDLKLAMYMKVSPR) lie on the Cytoplasmic side of the membrane. Residues 591–611 (LIFAVQIYATIISGMVNVGVQ) traverse the membrane as a helical segment. Topologically, residues 612–659 (EWMMHNIDGLCTTDQPNGFTCANGRTVFNASIIWSLPKYLFSSGRIYN) are extracellular. The N-linked (GlcNAc...) asparagine glycan is linked to N640. The helical transmembrane segment at 660–680 (PLMWFFLIGLLFPLAVYAVQW) threads the bilayer. At 681–736 (KFPKFKFAKHIHTPVFFTGPGNIPPSTPYNYSLFFAMSFCLNLIRKRWRAWFNKYN) the chain is on the cytoplasmic side. Residues 737-757 (FVMGAGVEAGVAISVVIIFLC) form a helical membrane-spanning segment. Residues 758-799 (VQYPGGKLSWWGNNVWKRTYDNDYKKFYTLKKGETFGYDKWW) lie on the Extracellular side of the membrane.

The protein belongs to the oligopeptide OPT transporter family.

The protein resides in the cell membrane. Functionally, high affinity transporter for glutathione. Also transports tetra- and pentapeptides like the opioids leucine enkephalin (Tyr-Gly-Gly-Phe-Leu) and methionine enkephalin (Tyr-Gly-Gly_Phe-Met) across the cell membrane. The chain is Oligopeptide transporter 1 (OPT1) from Saccharomyces cerevisiae (strain ATCC 204508 / S288c) (Baker's yeast).